The primary structure comprises 119 residues: DNA-binding protein MMP0157 (119 aa).

Residues 1–12 (MNPEEIRQRRLQ) show a composition bias toward basic and acidic residues. The disordered stretch occupies residues 1–35 (MNPEEIRQRRLQEMQAKAQAQGAANDPEAQRQMQE).

Belongs to the PDCD5 family.

The chain is DNA-binding protein MMP0157 from Methanococcus maripaludis (strain DSM 14266 / JCM 13030 / NBRC 101832 / S2 / LL).